A 208-amino-acid chain; its full sequence is Uracil phosphoribosyltransferase (208 aa).

Residues Arg78, Arg103, and 130–138 (DPMLATGGS) contribute to the 5-phospho-alpha-D-ribose 1-diphosphate site. Residues Ile193 and 198-200 (GDA) each bind uracil. Residue Asp199 coordinates 5-phospho-alpha-D-ribose 1-diphosphate.

This sequence belongs to the UPRTase family. Mg(2+) serves as cofactor.

It carries out the reaction UMP + diphosphate = 5-phospho-alpha-D-ribose 1-diphosphate + uracil. Its pathway is pyrimidine metabolism; UMP biosynthesis via salvage pathway; UMP from uracil: step 1/1. Its activity is regulated as follows. Allosterically activated by GTP. Its function is as follows. Catalyzes the conversion of uracil and 5-phospho-alpha-D-ribose 1-diphosphate (PRPP) to UMP and diphosphate. The sequence is that of Uracil phosphoribosyltransferase from Escherichia coli O139:H28 (strain E24377A / ETEC).